Consider the following 88-residue polypeptide: MLTAQDKQKIIKENQLAESDTGSPEVQVALLTARINDLKGHFEAHKKDNHSRRGLLRLVSQRRKLLDYLHDKDVERYRSLIKKLNIRR.

It belongs to the universal ribosomal protein uS15 family. Part of the 30S ribosomal subunit. Forms a bridge to the 50S subunit in the 70S ribosome, contacting the 23S rRNA.

Functionally, one of the primary rRNA binding proteins, it binds directly to 16S rRNA where it helps nucleate assembly of the platform of the 30S subunit by binding and bridging several RNA helices of the 16S rRNA. In terms of biological role, forms an intersubunit bridge (bridge B4) with the 23S rRNA of the 50S subunit in the ribosome. The protein is Small ribosomal subunit protein uS15 of Francisella tularensis subsp. holarctica (strain LVS).